The sequence spans 324 residues: NADH-ubiquinone oxidoreductase chain 1 (324 aa).

A run of 8 helical transmembrane segments spans residues 9–29 (LTMALSYAVPILIAVAFLTLV), 75–95 (ILFIATPILALLLAITIWIPL), 106–126 (LGLLFLLSMSSLAVYSILWSG), 142–162 (VAQTISYEVTLAIILLSVIML), 177–197 (PLYLIFSTWPLAMMWYISTLA), 228–248 (LFFLAEYANIMLMNTLTAILF), 259–279 (ELFPLILATKTLLLSSGFLWV), and 300–320 (LPLTLALCLWHTSLPISYAGI).

It belongs to the complex I subunit 1 family.

The protein localises to the mitochondrion inner membrane. The catalysed reaction is a ubiquinone + NADH + 5 H(+)(in) = a ubiquinol + NAD(+) + 4 H(+)(out). Core subunit of the mitochondrial membrane respiratory chain NADH dehydrogenase (Complex I) that is believed to belong to the minimal assembly required for catalysis. Complex I functions in the transfer of electrons from NADH to the respiratory chain. The immediate electron acceptor for the enzyme is believed to be ubiquinone. The chain is NADH-ubiquinone oxidoreductase chain 1 (MT-ND1) from Struthio camelus (Common ostrich).